Consider the following 146-residue polypeptide: 3-dehydroquinate dehydratase (146 aa).

Y23 (proton acceptor) is an active-site residue. Substrate-binding residues include N75, H81, and D88. H101 (proton donor) is an active-site residue. Residues 102–103 (LS) and R112 contribute to the substrate site.

The protein belongs to the type-II 3-dehydroquinase family. In terms of assembly, homododecamer.

The catalysed reaction is 3-dehydroquinate = 3-dehydroshikimate + H2O. It functions in the pathway metabolic intermediate biosynthesis; chorismate biosynthesis; chorismate from D-erythrose 4-phosphate and phosphoenolpyruvate: step 3/7. In terms of biological role, catalyzes a trans-dehydration via an enolate intermediate. This chain is 3-dehydroquinate dehydratase, found in Saccharophagus degradans (strain 2-40 / ATCC 43961 / DSM 17024).